Consider the following 148-residue polypeptide: Deoxyuridine 5'-triphosphate nucleotidohydrolase (148 aa).

Substrate contacts are provided by residues 67 to 69 (RSG), asparagine 80, 84 to 86 (LID), and methionine 94.

The protein belongs to the dUTPase family. The cofactor is Mg(2+).

The enzyme catalyses dUTP + H2O = dUMP + diphosphate + H(+). The protein operates within pyrimidine metabolism; dUMP biosynthesis; dUMP from dCTP (dUTP route): step 2/2. In terms of biological role, this enzyme is involved in nucleotide metabolism: it produces dUMP, the immediate precursor of thymidine nucleotides and it decreases the intracellular concentration of dUTP so that uracil cannot be incorporated into DNA. The polypeptide is Deoxyuridine 5'-triphosphate nucleotidohydrolase (Francisella tularensis subsp. holarctica (strain FTNF002-00 / FTA)).